A 528-amino-acid polypeptide reads, in one-letter code: Glutamyl-tRNA(Gln) amidotransferase subunit A, mitochondrial (528 aa).

Lysine 76 serves as the catalytic Charge relay system. The tract at residues 148–167 (YREKRKQNPHSENEDSDWLI) is disordered. Serine 171 serves as the catalytic Charge relay system. Serine 195 serves as the catalytic Acyl-ester intermediate.

This sequence belongs to the amidase family. GatA subfamily. Subunit of the heterotrimeric GatCAB amidotransferase (AdT) complex, composed of A (QRSL1), B (GATB) and C (GATC) subunits.

It localises to the mitochondrion. The catalysed reaction is L-glutamyl-tRNA(Gln) + L-glutamine + ATP + H2O = L-glutaminyl-tRNA(Gln) + L-glutamate + ADP + phosphate + H(+). Functionally, allows the formation of correctly charged Gln-tRNA(Gln) through the transamidation of misacylated Glu-tRNA(Gln) in the mitochondria. The reaction takes place in the presence of glutamine and ATP through an activated gamma-phospho-Glu-tRNA(Gln). This chain is Glutamyl-tRNA(Gln) amidotransferase subunit A, mitochondrial, found in Homo sapiens (Human).